The sequence spans 110 residues: Large ribosomal subunit protein uL24 (110 aa).

It belongs to the universal ribosomal protein uL24 family. Part of the 50S ribosomal subunit.

In terms of biological role, one of two assembly initiator proteins, it binds directly to the 5'-end of the 23S rRNA, where it nucleates assembly of the 50S subunit. One of the proteins that surrounds the polypeptide exit tunnel on the outside of the subunit. The polypeptide is Large ribosomal subunit protein uL24 (Chloroflexus aurantiacus (strain ATCC 29366 / DSM 635 / J-10-fl)).